A 242-amino-acid polypeptide reads, in one-letter code: ATP synthase subunit a (242 aa).

6 consecutive transmembrane segments (helical) span residues 29 to 49 (SAAY…LAFS), 84 to 104 (FVPV…FGMI), 114 to 134 (IIIT…VGFV), 140 to 160 (FLSL…MIII), 189 to 209 (VIAS…IPLM), and 210 to 230 (VILI…FTIL).

The protein belongs to the ATPase A chain family. In terms of assembly, F-type ATPases have 2 components, CF(1) - the catalytic core - and CF(0) - the membrane proton channel. CF(1) has five subunits: alpha(3), beta(3), gamma(1), delta(1), epsilon(1). CF(0) has three main subunits: a(1), b(2) and c(9-12). The alpha and beta chains form an alternating ring which encloses part of the gamma chain. CF(1) is attached to CF(0) by a central stalk formed by the gamma and epsilon chains, while a peripheral stalk is formed by the delta and b chains.

It localises to the cell inner membrane. In terms of biological role, key component of the proton channel; it plays a direct role in the translocation of protons across the membrane. In Rickettsia bellii (strain OSU 85-389), this protein is ATP synthase subunit a.